The primary structure comprises 446 residues: Ribosomal protein uS12 methylthiotransferase RimO (446 aa).

Residues 4–119 enclose the MTTase N-terminal domain; the sequence is YKVGMVSLGC…IDKVIKEFIE (116 aa). [4Fe-4S] cluster-binding residues include C13, C48, C82, C157, C161, and C164. Positions 143 to 373 constitute a Radical SAM core domain; it reads TTQKESAYIR…MLSQEKISND (231 aa). The TRAM domain maps to 376 to 442; it reads KLKVNKKYDI…DYDLIGVVED (67 aa).

This sequence belongs to the methylthiotransferase family. RimO subfamily. [4Fe-4S] cluster serves as cofactor.

The protein localises to the cytoplasm. The catalysed reaction is L-aspartate(89)-[ribosomal protein uS12]-hydrogen + (sulfur carrier)-SH + AH2 + 2 S-adenosyl-L-methionine = 3-methylsulfanyl-L-aspartate(89)-[ribosomal protein uS12]-hydrogen + (sulfur carrier)-H + 5'-deoxyadenosine + L-methionine + A + S-adenosyl-L-homocysteine + 2 H(+). Its function is as follows. Catalyzes the methylthiolation of an aspartic acid residue of ribosomal protein uS12. This is Ribosomal protein uS12 methylthiotransferase RimO from Clostridium botulinum (strain Eklund 17B / Type B).